Reading from the N-terminus, the 137-residue chain is Large ribosomal subunit protein uL16 (137 aa).

This sequence belongs to the universal ribosomal protein uL16 family. Part of the 50S ribosomal subunit.

Functionally, binds 23S rRNA and is also seen to make contacts with the A and possibly P site tRNAs. The sequence is that of Large ribosomal subunit protein uL16 from Alcanivorax borkumensis (strain ATCC 700651 / DSM 11573 / NCIMB 13689 / SK2).